The sequence spans 267 residues: MSHFEAFMLALIQGLTEFLPVSSSAHLILPSEILGWPDQGLAFDVAVHVGTLAAVILYFRKEVVTLLSAWITSIFKGKHTAESKLTWMIALATIPACIFGLFMKDFIELYLRSAWVIATTTIIFAILLWWVDKHSEHKFDEYQTGWKRALFIGLAQAAAIIPGTSRSGATMTAALYLGFTREAAARFSFLMSIPIIVLAGSYLGLKLVTSGVPIDFSALSIGIAVSFISAYACIHAFLKLVTRVGMMPFVIYRLVLGFGLIAFLLSK.

The next 7 membrane-spanning stretches (helical) occupy residues 39-59 (QGLA…ILYF), 87-107 (WMIA…KDFI), 111-131 (LRSA…LWWV), 149-169 (ALFI…RSGA), 189-209 (FLMS…KLVT), 218-238 (ALSI…HAFL), and 244-264 (VGMM…IAFL).

Belongs to the UppP family.

Its subcellular location is the cell inner membrane. The catalysed reaction is di-trans,octa-cis-undecaprenyl diphosphate + H2O = di-trans,octa-cis-undecaprenyl phosphate + phosphate + H(+). Catalyzes the dephosphorylation of undecaprenyl diphosphate (UPP). Confers resistance to bacitracin. The polypeptide is Undecaprenyl-diphosphatase (Photobacterium profundum (strain SS9)).